Here is a 160-residue protein sequence, read N- to C-terminus: Cyclic pyranopterin monophosphate synthase (160 aa).

Substrate contacts are provided by residues 75–77 (LCH) and 113–114 (ME). Residue Asp128 is part of the active site.

The protein belongs to the MoaC family. As to quaternary structure, homohexamer; trimer of dimers.

It catalyses the reaction (8S)-3',8-cyclo-7,8-dihydroguanosine 5'-triphosphate = cyclic pyranopterin phosphate + diphosphate. It participates in cofactor biosynthesis; molybdopterin biosynthesis. In terms of biological role, catalyzes the conversion of (8S)-3',8-cyclo-7,8-dihydroguanosine 5'-triphosphate to cyclic pyranopterin monophosphate (cPMP). The polypeptide is Cyclic pyranopterin monophosphate synthase (Beijerinckia indica subsp. indica (strain ATCC 9039 / DSM 1715 / NCIMB 8712)).